A 177-amino-acid chain; its full sequence is Outer membrane lipoprotein Blc (177 aa).

An N-terminal signal peptide occupies residues 1–18 (MRILPVVAAVTAAFLVVA). Residue Cys19 is the site of N-palmitoyl cysteine attachment. Cys19 is lipidated: S-diacylglycerol cysteine.

Belongs to the calycin superfamily. Lipocalin family. Homodimer.

The protein resides in the cell outer membrane. Functionally, involved in the storage or transport of lipids necessary for membrane maintenance under stressful conditions. Displays a binding preference for lysophospholipids. This Citrobacter freundii protein is Outer membrane lipoprotein Blc.